The chain runs to 347 residues: UPF0284 protein YN1551_0030 (347 aa).

It belongs to the UPF0284 family.

This chain is UPF0284 protein YN1551_0030, found in Saccharolobus islandicus (strain Y.N.15.51 / Yellowstone #2) (Sulfolobus islandicus).